Here is a 369-residue protein sequence, read N- to C-terminus: Pulmonary surfactant-associated protein D (369 aa).

A signal peptide spans 1 to 20; it reads MLLLPLSVLLLLTQPWRSLG. S-nitrosocysteine occurs at positions 35 and 40. A disordered region spans residues 41–215; sequence SPPEDGLPGR…ERGAKGESGL (175 aa). Residues 46–216 enclose the Collagen-like domain; it reads GLPGRDGRDG…RGAKGESGLA (171 aa). Over residues 47 to 65 the composition is skewed to basic and acidic residues; that stretch reads LPGRDGRDGREGPRGEKGD. A 4-hydroxyproline modification is found at Pro-78. Residue Lys-87 is modified to 5-hydroxylysine. An N-linked (GlcNAc...) asparagine glycan is attached at Asn-90. Pro-96 carries the 4-hydroxyproline modification. Lys-99 carries the 5-hydroxylysine modification. The segment covering 139 to 148 has biased composition (gly residues); it reads GPKGGVGAPG. A 4-hydroxyproline mark is found at Pro-165 and Pro-171. Over residues 165 to 191 the composition is skewed to low complexity; that stretch reads PGEPGAPGRAGAPGPAGAIGPQGPSGA. Basic and acidic residues predominate over residues 198–210; sequence KGDRGTPGERGAK. The stretch at 217-248 forms a coiled coil; the sequence is EVNALRQRVGILEGQLQRLQNAFSQYKKAMLF. The C-type lectin domain occupies 254 to 369; the sequence is VGEKIFKTEG…GEQRLVICEF (116 aa). Cystine bridges form between Cys-275/Cys-367 and Cys-345/Cys-359.

This sequence belongs to the SFTPD family. In terms of assembly, oligomeric complex of 4 set of homotrimers. Post-translationally, hydroxylation on proline residues within the sequence motif, GXPG, is most likely to be 4-hydroxy as this fits the requirement for 4-hydroxylation in vertebrates. S-nitrosylation at Cys-35 and Cys-40 alters the quaternary structure which results in a pro-inflammatory chemoattractive signaling activity with macrophages.

The protein localises to the secreted. The protein resides in the extracellular space. It is found in the extracellular matrix. Its subcellular location is the surface film. In terms of biological role, contributes to the lung's defense against inhaled microorganisms, organic antigens and toxins. Interacts with compounds such as bacterial lipopolysaccharides, oligosaccharides and fatty acids and modulates leukocyte action in immune response. May participate in the extracellular reorganization or turnover of pulmonary surfactant. Binds strongly maltose residues and to a lesser extent other alpha-glucosyl moieties. This chain is Pulmonary surfactant-associated protein D (SFTPD), found in Bos taurus (Bovine).